The following is an 82-amino-acid chain: 4-(gamma-L-glutamylamino)butanoyl-[BtrI acyl-carrier protein] monooxygenase BtrO (82 aa).

In terms of assembly, homotetramer.

It catalyses the reaction 4-(gamma-L-glutamylamino)butanoyl-[BtrI ACP] + FMNH2 + O2 = 4-(gamma-L-glutamylamino)-(2S)-2-hydroxybutanoyl-[BtrI ACP] + FMN + H2O + H(+). Its pathway is antibiotic biosynthesis; butirosin biosynthesis. NAD(P)H:FMN oxidoreductase component of a two-component system involved in the biosynthesis of the side chain of the aminoglycoside antibiotics in the biosynthetic pathway of butirosin. Together with BtrO, mediates hydroxylation of gamma-L-Glu-GABA-S-BtrI. The chain is 4-(gamma-L-glutamylamino)butanoyl-[BtrI acyl-carrier protein] monooxygenase BtrO (btrV) from Niallia circulans (Bacillus circulans).